A 362-amino-acid chain; its full sequence is Putative membrane-bound acyltransferase YfiQ (362 aa).

Transmembrane regions (helical) follow at residues 11–31 (CISC…MLQA), 44–64 (FRTL…FLLA), 82–102 (VIFV…TSAM), 119–139 (VFLG…YMLH), 153–173 (WVLS…SAAS), 181–201 (GGAF…FCLA), 220–240 (WVVY…SYVG), 252–267 (IMLY…FHLF), 283–303 (YSFS…VLLL), and 308–328 (IPAV…PIMT).

It belongs to the acyltransferase 3 family.

The protein localises to the cell membrane. This chain is Putative membrane-bound acyltransferase YfiQ (yfiQ), found in Bacillus subtilis (strain 168).